The sequence spans 119 residues: Basic phospholipase A2 (119 aa).

7 cysteine pairs are disulfide-bonded: Cys11–Cys72, Cys27–Cys118, Cys29–Cys45, Cys44–Cys100, Cys51–Cys93, Cys61–Cys86, and Cys79–Cys91. The Ca(2+) site is built by Tyr28, Gly30, and Gly32. His48 is an active-site residue. A Ca(2+)-binding site is contributed by Asp49. Residue Asn82 is glycosylated (N-linked (GlcNAc...) asparagine). The active site involves Asp94.

It belongs to the phospholipase A2 family. Group I subfamily. D49 sub-subfamily. Requires Ca(2+) as cofactor. In terms of tissue distribution, expressed by the venom gland.

It localises to the secreted. It catalyses the reaction a 1,2-diacyl-sn-glycero-3-phosphocholine + H2O = a 1-acyl-sn-glycero-3-phosphocholine + a fatty acid + H(+). In terms of biological role, snake venom phospholipase A2 (PLA2) that shows weak myotoxicity and induces edema in mice. Shows no cytotoxicity in vitro. Has an anticoagulant effect in vitro. PLA2 catalyzes the calcium-dependent hydrolysis of the 2-acyl groups in 3-sn-phosphoglycerides. The protein is Basic phospholipase A2 of Micrurus mipartitus (Red-tailed coral snake).